The following is a 300-amino-acid chain: Ribosomal RNA small subunit methyltransferase H (300 aa).

Residues 43-45 (AGH), Asp60, Asp105, and Gln112 each bind S-adenosyl-L-methionine.

This sequence belongs to the methyltransferase superfamily. RsmH family.

The protein localises to the cytoplasm. It catalyses the reaction cytidine(1402) in 16S rRNA + S-adenosyl-L-methionine = N(4)-methylcytidine(1402) in 16S rRNA + S-adenosyl-L-homocysteine + H(+). Specifically methylates the N4 position of cytidine in position 1402 (C1402) of 16S rRNA. This is Ribosomal RNA small subunit methyltransferase H from Deinococcus deserti (strain DSM 17065 / CIP 109153 / LMG 22923 / VCD115).